Reading from the N-terminus, the 607-residue chain is Polypeptide N-acetylgalactosaminyltransferase 18 (607 aa).

The Cytoplasmic portion of the chain corresponds to 1 to 12 (MVCTRKTKTLVS). A helical; Signal-anchor for type II membrane protein transmembrane segment spans residues 13–35 (TCVILSGMTNIICLLYVGWVTNY). Topologically, residues 36 to 607 (IASVYVRGQE…ITNVLRSLAS (572 aa)) are lumenal. Disulfide bonds link C144/C377, C368/C447, C482/C498, C530/C543, and C571/C591. N146 carries an N-linked (GlcNAc...) asparagine glycan. The interval 153 to 267 (LPEVSIVFIF…VGWAEPVLTR (115 aa)) is catalytic subdomain A. D194 contacts substrate. N195 carries N-linked (GlcNAc...) asparagine glycosylation. Mn(2+) contacts are provided by D251 and H253. N-linked (GlcNAc...) asparagine glycosylation occurs at N320. Residues 324 to 385 (PIRSPALIGC…PCSRIAHIER (62 aa)) form a catalytic subdomain B region. Position 382 (H382) interacts with Mn(2+). Residues R385 and Y390 each contribute to the substrate site. The Ricin B-type lectin domain maps to 469–599 (AYGVLQNSLK…KCSGQHWSIT (131 aa)).

The protein belongs to the glycosyltransferase 2 family. GalNAc-T subfamily. Mn(2+) serves as cofactor.

The protein localises to the golgi apparatus membrane. It carries out the reaction L-seryl-[protein] + UDP-N-acetyl-alpha-D-galactosamine = a 3-O-[N-acetyl-alpha-D-galactosaminyl]-L-seryl-[protein] + UDP + H(+). The enzyme catalyses L-threonyl-[protein] + UDP-N-acetyl-alpha-D-galactosamine = a 3-O-[N-acetyl-alpha-D-galactosaminyl]-L-threonyl-[protein] + UDP + H(+). Its pathway is protein modification; protein glycosylation. In terms of biological role, catalyzes the initial reaction in O-linked oligosaccharide biosynthesis, the transfer of an N-acetyl-D-galactosamine (GalNAc) residue from UDP-GalNAc to a serine or threonine residue on the protein receptor. The chain is Polypeptide N-acetylgalactosaminyltransferase 18 (GALNT18) from Homo sapiens (Human).